Reading from the N-terminus, the 270-residue chain is Peflin (270 aa).

The tract at residues 1 to 97 (MSYQYGQGYS…YRQQGSAGNV (97 aa)) is disordered. 5 consecutive repeat copies span residues 22–30 (PPRAPYAGG), 44–54 (PPGQQYGGGSP), 62–70 (GPRAPYGGG), 72–81 (APGGPYGGYG), and 83–91 (PQGGPYRQQ). The interval 22 to 91 (PPRAPYAGGP…QPQGGPYRQQ (70 aa)) is 5 X 9 AA approximate tandem repeat of [AP]-P-G-G-P-Y-G-G-P-P. 2 stretches are compositionally biased toward low complexity: residues 26 to 47 (PYAG…PPGQ) and 55 to 66 (YGSYGQPGPRAP). Gly residues predominate over residues 67–84 (YGGGQAPGGPYGGYGQPQ). EF-hand domains lie at 100 to 135 (GVNP…FNNS), 141 to 169 (TCIM…WTFL), 170 to 202 (QQWR…MGYN), 203 to 239 (LSPQ…LQSM), and 240 to 269 (TQAF…ITRL). The Ca(2+) site is built by D113, D115, S117, Y119, and E124. Positions 180, 182, 184, 186, and 191 each coordinate Ca(2+).

As to quaternary structure, heterodimer; heterodimerizes (via the EF-hand 5) with pdcd6.

The protein resides in the cytoplasm. Its subcellular location is the endoplasmic reticulum. It localises to the membrane. The protein localises to the cytoplasmic vesicle. It is found in the COPII-coated vesicle membrane. Calcium-binding protein that acts as an adapter that bridges unrelated proteins or stabilizes weak protein-protein complexes in response to calcium. Acts as a negative regulator of ER-Golgi transport. The protein is Peflin of Danio rerio (Zebrafish).